Reading from the N-terminus, the 385-residue chain is DNA double-strand break repair protein Mre11 (385 aa).

3 residues coordinate Mn(2+): Asp14, His16, and Asp58. His94 serves as the catalytic Proton donor. Mn(2+)-binding residues include His180, His216, and His218.

It belongs to the MRE11/RAD32 family. Homodimer. Forms a heterotetramer composed of two Mre11 subunits and two Rad50 subunits. Homodimerization facilitates DNA binding. It depends on Mn(2+) as a cofactor.

Its activity is regulated as follows. Nuclease activity is regulated by Rad50. The mirin-derivative PFM39, specifically inhibits the 3'-5' exonuclease activity. The N-alkylated mirin-derivatives PFM03 and PFM01 specifically inhibit the endonuclease activity. In terms of biological role, part of the Rad50/Mre11 complex, which is involved in the early steps of DNA double-strand break (DSB) repair. The complex may facilitate opening of the processed DNA ends to aid in the recruitment of HerA and NurA. Mre11 binds to DSB ends and has both double-stranded 3'-5' exonuclease activity and single-stranded endonuclease activity. This is DNA double-strand break repair protein Mre11 from Thermotoga maritima (strain ATCC 43589 / DSM 3109 / JCM 10099 / NBRC 100826 / MSB8).